Consider the following 217-residue polypeptide: 7-cyano-7-deazaguanine synthase (217 aa).

7–17 (LSGGMDSTTLL) is a binding site for ATP. 4 residues coordinate Zn(2+): C183, C191, C194, and C197.

This sequence belongs to the QueC family. It depends on Zn(2+) as a cofactor.

It carries out the reaction 7-carboxy-7-deazaguanine + NH4(+) + ATP = 7-cyano-7-deazaguanine + ADP + phosphate + H2O + H(+). Its pathway is purine metabolism; 7-cyano-7-deazaguanine biosynthesis. In terms of biological role, catalyzes the ATP-dependent conversion of 7-carboxy-7-deazaguanine (CDG) to 7-cyano-7-deazaguanine (preQ(0)). This Methanoregula boonei (strain DSM 21154 / JCM 14090 / 6A8) protein is 7-cyano-7-deazaguanine synthase.